The sequence spans 396 residues: MLQSIVLSVCMFMLHTVAASGPQSYQKLDFTNVGFTGSYVDVNKFKDITNNESCTCEVGDRVWFSGKNAPLADYLSVHFRGPLKLKQFAFYTSPGFTVNNSRSSSDWNRLAYYESSSKTADNVTFLNHGGEASPCLGNALSYASSNGTGSASEATVLADGTLISSDQEYIIYSNVSCPKSGYDKGCGVYRSGIPAYYGYGGTTKMFLFEFEMPTETEKNSSSIGYYDLPAIWLLNDHIARTSQYPTNANCSCWASGCGEYDIFEAMNGTEKNHLYSTFHTFQGIEDLGTGIQSYGYITRNTTGTMKGGVVFDSSGNVVSFISDATPFNGTVSADTVNDLLAAIPENETYSSQLMSISATAPSTTSKSNGVALTKMQNGVWYYILAIFTAFTQVVLI.

Positions 1–19 (MLQSIVLSVCMFMLHTVAA) are cleaved as a signal peptide. N-linked (GlcNAc...) asparagine glycans are attached at residues Asn51, Asn99, Asn122, Asn146, Asn174, Asn219, and Asn249. Positions 259–264 (EYDIFE) match the ExDxxE motif motif. 4 N-linked (GlcNAc...) asparagine glycosylation sites follow: Asn267, Asn300, Asn328, and Asn346. Residue Asn368 is the site of GPI-anchor amidated asparagine attachment. A propeptide spans 369 to 396 (GVALTKMQNGVWYYILAIFTAFTQVVLI) (removed in mature form).

Belongs to the PGA52 family. Post-translationally, extensively N-glycosylated.

The protein localises to the cell membrane. It carries out the reaction Hydrolysis of (1-&gt;3)-beta-D-glucosidic linkages in (1-&gt;3)-beta-D-glucans.. Functionally, probable circularly permuted 1,3-beta-glucanase involved in cell wall modification through beta-1,3-glucan network alterations such as increased branching or remodeling. The chain is Probable circularly permuted 1,3-beta-glucanase YJL171C (TOH1) from Saccharomyces cerevisiae (strain ATCC 204508 / S288c) (Baker's yeast).